Reading from the N-terminus, the 416-residue chain is cAMP-dependent protein kinase type II-beta regulatory subunit (416 aa).

The dimerization and phosphorylation stretch occupies residues 2 to 151 (SIEIPAGLTE…RLQEACKDIL (150 aa)). The interval 53–97 (HEGRTWGDAGAAAGGGTPSKGVNFAEEPMRSDSENGEEEEAAEAG) is disordered. Residue threonine 69 is modified to Phosphothreonine. Serine 83, serine 85, and serine 112 each carry phosphoserine. Residues 152–273 (LFKN…ESLP), glutamate 221, arginine 230, 274–416 (FLKS…EPTA), glutamate 350, and arginine 359 contribute to the 3',5'-cyclic AMP site.

This sequence belongs to the cAMP-dependent kinase regulatory chain family. As to quaternary structure, the inactive form of the enzyme is composed of two regulatory chains and two catalytic chains. Activation by cAMP produces two active catalytic monomers and a regulatory dimer that binds four cAMP molecules. Interacts with PRKACA and PRKACB. Interacts with the phosphorylated form of PJA2. Forms a complex composed of PRKAR2B, GSK3B and GSKIP through GSKIP interaction; facilitates PKA-induced phosphorylation and regulates GSK3B activity. In terms of processing, phosphorylated by the activated catalytic chain. Four types of regulatory chains are found: I-alpha, I-beta, II-alpha, and II-beta. Their expression varies among tissues and is in some cases constitutive and in others inducible. Brain. Present in a few pyramidal neurons and mostly in mossy fibers. Colocalizes with PJA2 in dentate granule cells and at postsynaptic sites of primary hippocampal neurons.

It is found in the cytoplasm. The protein resides in the cell membrane. In terms of biological role, regulatory subunit of the cAMP-dependent protein kinases involved in cAMP signaling in cells. Type II regulatory chains mediate membrane association by binding to anchoring proteins, including the MAP2 kinase. The protein is cAMP-dependent protein kinase type II-beta regulatory subunit (Prkar2b) of Rattus norvegicus (Rat).